The following is a 316-amino-acid chain: Apolipoprotein E (316 aa).

An N-terminal signal peptide occupies residues 1–18 (MKALWAVLVVTLLAGCLA). 8 repeat units span residues 76–97 (VLME…EQLG), 98–119 (PMAE…SRLG), 120–141 (ADME…TMLG), 142–163 (QSTE…KRLM), 164–185 (RDAE…EGAE), 186–207 (RGVG…QRTA), 208–229 (NLGA…ARIR), and 230–251 (GRLE…EQME). The segment at 76-251 (VLMEDTMTEL…RLEEMREQME (176 aa)) is 8 X 22 AA approximate tandem repeats. A Methionine sulfoxide modification is found at Met139. Ser143 is modified (phosphoserine). Positions 154 to 164 (HLRKLRKRLMR) are LDL and other lipoprotein receptors binding. 158–161 (LRKR) provides a ligand contact to heparin. The interval 206–286 (TANLGAGAGK…GWFEPLVEDM (81 aa)) is lipid-binding and lipoprotein association. A heparin-binding site is contributed by 225-232 (GARIRGRL). The homooligomerization stretch occupies residues 262-316 (QQMRLQAEIFQARLKGWFEPLVEDMQRQWANLVEKIQASVAANPIPPSSVPQESP). Positions 274–286 (RLKGWFEPLVEDM) are specificity for association with VLDL.

The protein belongs to the apolipoprotein A1/A4/E family. In terms of assembly, homotetramer. May interact with ABCA1; functionally associated with ABCA1 in the biogenesis of HDLs. May interact with APP/A4 amyloid-beta peptide; the interaction is extremely stable in vitro but its physiological significance is unclear. May interact with MAPT. May interact with MAP2. In the cerebrospinal fluid, interacts with secreted SORL1. Interacts with PMEL; this allows the loading of PMEL luminal fragment on ILVs to induce fibril nucleation. Post-translationally, APOE exists as multiple glycosylated and sialylated glycoforms within cells and in plasma. The extent of glycosylation and sialylation are tissue and context specific. In terms of processing, glycated in plasma VLDL. Phosphorylated by FAM20C in the extracellular medium.

Its subcellular location is the secreted. The protein localises to the extracellular space. It is found in the extracellular matrix. The protein resides in the extracellular vesicle. It localises to the endosome. Its subcellular location is the multivesicular body. Functionally, APOE is an apolipoprotein, a protein associating with lipid particles, that mainly functions in lipoprotein-mediated lipid transport between organs via the plasma and interstitial fluids. APOE is a core component of plasma lipoproteins and is involved in their production, conversion and clearance. Apolipoproteins are amphipathic molecules that interact both with lipids of the lipoprotein particle core and the aqueous environment of the plasma. As such, APOE associates with chylomicrons, chylomicron remnants, very low density lipoproteins (VLDL) and intermediate density lipoproteins (IDL) but shows a preferential binding to high-density lipoproteins (HDL). It also binds a wide range of cellular receptors including the LDL receptor/LDLR, the LDL receptor-related proteins LRP1, LRP2 and LRP8 and the very low-density lipoprotein receptor/VLDLR that mediate the cellular uptake of the APOE-containing lipoprotein particles. Finally, APOE also has a heparin-binding activity and binds heparan-sulfate proteoglycans on the surface of cells, a property that supports the capture and the receptor-mediated uptake of APOE-containing lipoproteins by cells. A main function of APOE is to mediate lipoprotein clearance through the uptake of chylomicrons, VLDLs, and HDLs by hepatocytes. APOE is also involved in the biosynthesis by the liver of VLDLs as well as their uptake by peripheral tissues ensuring the delivery of triglycerides and energy storage in muscle, heart and adipose tissues. By participating in the lipoprotein-mediated distribution of lipids among tissues, APOE plays a critical role in plasma and tissues lipid homeostasis. APOE is also involved in two steps of reverse cholesterol transport, the HDLs-mediated transport of cholesterol from peripheral tissues to the liver, and thereby plays an important role in cholesterol homeostasis. First, it is functionally associated with ABCA1 in the biogenesis of HDLs in tissues. Second, it is enriched in circulating HDLs and mediates their uptake by hepatocytes. APOE also plays an important role in lipid transport in the central nervous system, regulating neuron survival and sprouting. This Peromyscus leucopus (White-footed mouse) protein is Apolipoprotein E (Apoe).